A 384-amino-acid polypeptide reads, in one-letter code: Zinc metalloproteinase nas-12 (384 aa).

The signal sequence occupies residues 1–25 (MLYIPQFSIYFCLGYLLLFCKISNA). Residues 73 to 271 (VSIKGSSMNR…EKLNRLGQCG (199 aa)) enclose the Peptidase M12A domain. Cystine bridges form between cysteine 116-cysteine 270, cysteine 137-cysteine 156, cysteine 287-cysteine 325, cysteine 296-cysteine 318, and cysteine 305-cysteine 322. A Zn(2+)-binding site is contributed by histidine 164. Residue glutamate 165 is part of the active site. Residues histidine 168 and histidine 174 each contribute to the Zn(2+) site. The ShKT 1 domain occupies 287-325 (CQDVATAVSCEGNRRRGMCKNPFYKQMMIKSCQKTCRLC). The N-linked (GlcNAc...) asparagine glycan is linked to asparagine 340. 3 disulfide bridges follow: cysteine 348–cysteine 384, cysteine 355–cysteine 377, and cysteine 364–cysteine 381. One can recognise a ShKT 2 domain in the interval 348–384 (CEDKHPRCDIYSHNGFCTLPFYDDVRYQLCAKTCNLC).

Zn(2+) serves as cofactor. In terms of tissue distribution, expressed in pharyngeal glands.

The protein resides in the secreted. Metalloprotease. In Caenorhabditis elegans, this protein is Zinc metalloproteinase nas-12 (nas-12).